The chain runs to 338 residues: Lipoate-protein ligase A (338 aa).

Positions 29–216 (SPDQRVLFLW…AFFAYYDEQV (188 aa)) constitute a BPL/LPL catalytic domain. ATP-binding positions include R71, 76-79 (GAVF), and K134. (R)-lipoate is bound at residue K134.

It belongs to the LplA family. In terms of assembly, monomer.

The protein localises to the cytoplasm. It catalyses the reaction L-lysyl-[lipoyl-carrier protein] + (R)-lipoate + ATP = N(6)-[(R)-lipoyl]-L-lysyl-[lipoyl-carrier protein] + AMP + diphosphate + H(+). The protein operates within protein modification; protein lipoylation via exogenous pathway; protein N(6)-(lipoyl)lysine from lipoate: step 1/2. Its pathway is protein modification; protein lipoylation via exogenous pathway; protein N(6)-(lipoyl)lysine from lipoate: step 2/2. In terms of biological role, catalyzes both the ATP-dependent activation of exogenously supplied lipoate to lipoyl-AMP and the transfer of the activated lipoyl onto the lipoyl domains of lipoate-dependent enzymes. The protein is Lipoate-protein ligase A of Yersinia pseudotuberculosis serotype IB (strain PB1/+).